We begin with the raw amino-acid sequence, 457 residues long: Cysteine--tRNA ligase (457 aa).

Zn(2+) is bound at residue C28. Positions 30 to 40 (PTVYDTAHIGN) match the 'HIGH' region motif. The Zn(2+) site is built by C212, H237, and E241. The 'KMSKS' region motif lies at 270 to 274 (KMSKS). Residue K273 participates in ATP binding.

It belongs to the class-I aminoacyl-tRNA synthetase family. Monomer. Requires Zn(2+) as cofactor.

It is found in the cytoplasm. It catalyses the reaction tRNA(Cys) + L-cysteine + ATP = L-cysteinyl-tRNA(Cys) + AMP + diphosphate. This Wolbachia pipientis wMel protein is Cysteine--tRNA ligase.